We begin with the raw amino-acid sequence, 737 residues long: Autophagy-related protein 22 (737 aa).

The segment at 115-154 (RMSPANAGDNSDSYPYGDDTDGDSSSGLPPPRYPGDDTRP) is disordered. Positions 125-141 (SDSYPYGDDTDGDSSSG) are enriched in low complexity. 4 helical membrane-spanning segments follow: residues 166-186 (YAFAAEVYVICGIGSFIPILL), 232-252 (SFAMYTFSVSVLLQALLVVSI), 264-284 (KLLLAFAWIGSACVMAYIFIS), and 289-309 (LIGALLAIISNTSFGASFVLL). The tract at residues 327–353 (GDYGSPGYATTEEGDDEDDEYQEDSTR) is disordered. Positions 338-349 (EEGDDEDDEYQE) are enriched in acidic residues. An N-linked (GlcNAc...) asparagine glycan is attached at Asn-354. The helical transmembrane segment at 395–415 (GIGIGYIAGLFLQCVAIAILI) threads the bilayer. The N-linked (GlcNAc...) asparagine glycan is linked to Asn-419. 7 consecutive transmembrane segments (helical) span residues 426–446 (IVLCVIGAWWAIFTIPAAMWL), 487–507 (LVDIVLFLAGWFLLSDAIATT), 524–544 (WALGMINVISTASGILGAFSW), 559–579 (ILACIALFELIPLYGLMGYLP), 593–613 (WEMYPLAAIYGFVLGGLSGYC), 632–652 (LYAITDKGSSVFGPAIVGAII), and 661–681 (AFWFLAAIVGTPALFIWFINV).

Belongs to the ATG22 family.

It is found in the vacuole membrane. Its function is as follows. Vacuolar effluxer which mediate the efflux of amino acids resulting from autophagic degradation. The release of autophagic amino acids allows the maintenance of protein synthesis and viability during nitrogen starvation. This chain is Autophagy-related protein 22 (apg-11), found in Neurospora crassa (strain ATCC 24698 / 74-OR23-1A / CBS 708.71 / DSM 1257 / FGSC 987).